Consider the following 64-residue polypeptide: Disintegrin VB7B (64 aa).

Residues 1 to 64 form the Disintegrin domain; it reads ELLQNSGNPC…TGISSDCPRN (64 aa). 4 cysteine pairs are disulfide-bonded: C10–C33, C24–C30, C29–C54, and C42–C61. Positions 46-48 match the Cell attachment site; atypical (KGD) motif; sequence KGD.

This sequence belongs to the venom metalloproteinase (M12B) family. P-II subfamily. P-IIe sub-subfamily. In terms of assembly, heterodimer with VB7A; disulfide-linked. Expressed by the venom gland.

It localises to the secreted. Poor inhibitor of platelet aggregation. The disintegrin inhibits the adhesion of cells expressing the RGD-dependent integrin alpha-5/beta-1 (ITGA5/ITGB1) to immobilized fibronectin. Inhibition on alpha-IIb/beta-3 (ITGA2B/ITGB3) is low. The chain is Disintegrin VB7B from Vipera berus berus (Common viper).